Consider the following 927-residue polypeptide: MMTTTMDYNSSDQGFSWSEIALLGSVETMLEKVYGKHNHHPPIKVETRRRLSSISEELALETLRKVLNMPNVKTLDGIIIYFLNDAVTVDGSPRLWSGESPVQFPRTPGKKSCRASQAEVSLDREDPSPKFLRGDENGESKHISLLLALGELEFKKAFLLLTYLGGKSLGEVISGDEIRQWKDLPMVAYERAVWFKLGQNEERMQLESDSGKTHYYQCHVAPDGSYRLKGYFLENTGTHLHKVLGDDNVLTVRFDQLPKESTYCDNPYSKYKEIAKNGIMVGLRRYQFFVFKDGGKAEKKKRNSTKQVKCYFIRTGSTASSDMENPYILSGMSIHEARMHFMHVHTLPSPANYMARFSLILSKTKKLEVDMTEITVMQIDDIHCHDQSNNDVLDKNGKPRIHSDGTGYISEDLARMCPLNIFKGKSMRSNNIQGTCVQEPPLLIQIRMFNDGSAVKGIFLLNKNLPPQTVQVRPSMIKVYKDKNLSNFSTFNSLEVVTTSNPPKRAKLSKNLVALLSYGGVPNDFFLDILLNTLEKKKTIFFKVRAAGKAALHYGNMDDKNALQMIMAGIPLDEPYLKHYLSKLLKLEKDDLKAGKLPIDESYYLMGTVDPTGELKEDEVSGLAKSQDVLVYRNPGLHFGDIHILKATYVKSLEQYVGNSKYGVFFPQKGPRSLGDEIAGGDFDGDMYFISRNPKLLEHYKPSEPWVSSSPRSKIYTGRQPSELSPEQLEEELFKIFLKTGFSPSSVIGQAADSWLAIMDRFLTLGDENVKEKAEMKKKMLKLTDIYYDAIDAPKTGTEVNLPLDVKVDLFPHYMERNKTFKSTSILGLIFDTVDFHNAEDTTPSGISKLQCFEDEPVSEFDMEKCKLWHKDYRKEMCQAMNSDDDDSCNEVIQKYKQEFYSAAGFKESKKILEELYPKALALYNVT.

Positions 98-135 are disordered; sequence GESPVQFPRTPGKKSCRASQAEVSLDREDPSPKFLRGD. Residues 121 to 135 show a composition bias toward basic and acidic residues; it reads SLDREDPSPKFLRGD.

This sequence belongs to the RdRP family.

The enzyme catalyses RNA(n) + a ribonucleoside 5'-triphosphate = RNA(n+1) + diphosphate. Functionally, probably involved in the RNA silencing pathway and required for the generation of small interfering RNAs (siRNAs). This chain is Probable RNA-dependent RNA polymerase 4 (RDR4), found in Arabidopsis thaliana (Mouse-ear cress).